The sequence spans 421 residues: Phosphoribosylamine--glycine ligase (421 aa).

The ATP-grasp domain occupies 108-314 (KEIMVKYNVP…FAQNIDDIMM (207 aa)). 134–195 (IEEQGAPIVV…EEFLDGEEFS (62 aa)) is an ATP binding site. Mg(2+)-binding residues include glutamate 284 and asparagine 286.

This sequence belongs to the GARS family. The cofactor is Mg(2+). Mn(2+) is required as a cofactor.

The enzyme catalyses 5-phospho-beta-D-ribosylamine + glycine + ATP = N(1)-(5-phospho-beta-D-ribosyl)glycinamide + ADP + phosphate + H(+). It functions in the pathway purine metabolism; IMP biosynthesis via de novo pathway; N(1)-(5-phospho-D-ribosyl)glycinamide from 5-phospho-alpha-D-ribose 1-diphosphate: step 2/2. The chain is Phosphoribosylamine--glycine ligase from Streptococcus pyogenes serotype M18 (strain MGAS8232).